The primary structure comprises 303 residues: Glutathione transport system permease protein GsiD (303 aa).

6 consecutive transmembrane segments (helical) span residues 40 to 60, 105 to 125, 144 to 164, 165 to 185, 222 to 242, and 266 to 286; these read AMTA…ARWI, LAAG…LGLL, LFAF…GSGI, ANVI…LVRG, IVVF…SLSF, and VIAP…VLAF. The ABC transmembrane type-1 domain maps to 101–290; sequence AQISLAAGVF…LTVLAFNLLG (190 aa).

The protein belongs to the binding-protein-dependent transport system permease family. The complex is composed of two ATP-binding proteins (GsiA), two transmembrane proteins (GsiC and GsiD) and a solute-binding protein (GsiB).

The protein localises to the cell inner membrane. Part of the ABC transporter complex GsiABCD involved in glutathione import. Probably responsible for the translocation of the substrate across the membrane. The protein is Glutathione transport system permease protein GsiD of Shigella flexneri serotype 5b (strain 8401).